Consider the following 219-residue polypeptide: Large ribosomal subunit protein bL25 (219 aa).

Positions 194 to 219 are disordered; that stretch reads SSTELEETPEVPASAVPTTDQGESAE. The segment covering 209 to 219 has biased composition (polar residues); that stretch reads VPTTDQGESAE.

It belongs to the bacterial ribosomal protein bL25 family. CTC subfamily. In terms of assembly, part of the 50S ribosomal subunit; part of the 5S rRNA/L5/L18/L25 subcomplex. Contacts the 5S rRNA. Binds to the 5S rRNA independently of L5 and L18.

Its function is as follows. This is one of the proteins that binds to the 5S RNA in the ribosome where it forms part of the central protuberance. The chain is Large ribosomal subunit protein bL25 from Legionella pneumophila (strain Paris).